We begin with the raw amino-acid sequence, 470 residues long: Pre-mycofactocin glycosyltransferase (470 aa).

Residues 315–335 (LVISGGALMAWILMSIGTGLG) traverse the membrane as a helical segment.

It belongs to the glycosyltransferase 2 family.

It localises to the cell membrane. Involved in the biosynthesis of the enzyme cofactor mycofactocin (MFT). Acts as a glycosyltransferase that catalyzes the oligoglycosylation of pre-mycofactocin (PMFT), adding up to nine beta-1,4-linked glucose residues. Is required for the in vivo ethanol assimilation in M.smegmatis. This is Pre-mycofactocin glycosyltransferase (mftF) from Mycobacterium tuberculosis (strain CDC 1551 / Oshkosh).